A 144-amino-acid polypeptide reads, in one-letter code: Large ribosomal subunit protein uL11 (144 aa).

The protein belongs to the universal ribosomal protein uL11 family. In terms of assembly, part of the ribosomal stalk of the 50S ribosomal subunit. Interacts with L10 and the large rRNA to form the base of the stalk. L10 forms an elongated spine to which L12 dimers bind in a sequential fashion forming a multimeric L10(L12)X complex. Post-translationally, one or more lysine residues are methylated.

Forms part of the ribosomal stalk which helps the ribosome interact with GTP-bound translation factors. The polypeptide is Large ribosomal subunit protein uL11 (Neisseria meningitidis serogroup B (strain ATCC BAA-335 / MC58)).